The following is a 522-amino-acid chain: F-box only protein 7 (522 aa).

The tract at residues 1 to 88 (MRLRVRLLKR…QDDIPAPNIP (88 aa)) is ubiquitin-like. The interval 85 to 144 (PNIPSSTDSEHSSLQNNEQPSLATSSNQTSMQDEQPSDSFQGQAAQSGVWNDDSMLGPSQ) is disordered. Positions 87-133 (IPSSTDSEHSSLQNNEQPSLATSSNQTSMQDEQPSDSFQGQAAQSGV) are enriched in polar residues. The interval 92 to 129 (DSEHSSLQNNEQPSLATSSNQTSMQDEQPSDSFQGQAA) is important for interaction with PINK1. The interval 129 to 169 (AQSGVWNDDSMLGPSQNFEAESIQDNAHMAEGTGFYPSEPM) is important for interaction with CDK6. Residues 180–324 (PHSLETLYQS…PLLAFTRQAL (145 aa)) form an important for dimerization and interaction with PSMF1 region. The F-box domain maps to 329-375 (VFGLVVLPLELKLRIFRLLDVRSVLSLSAVCRDLFTASNDPLLWRFL). The tract at residues 381-522 (RDNTVRVQDT…RPTDGRLSFM (142 aa)) is important for interaction with CDK6. Omega-N-methylarginine occurs at positions 432 and 451. An RFDP motif motif is present at residues 481–484 (RFDP). Residues 483–522 (DPVGPLPGPNPILPGRGGPNDRFPFRPSRGRPTDGRLSFM) form a disordered region. Arg-518 is subject to Asymmetric dimethylarginine.

In terms of assembly, part of the SCF (SKP1-CUL1-F-box) E3 ubiquitin-protein ligase complex SCF(FBXO7) formed of CUL1, SKP1, RBX1 and FBXO7. Interacts via its C-terminal proline-rich region with DLGAP5. Interacts with BIRC2. Interacts with CDK6 and promotes its interaction with D-type cyclin. Interacts with PSMF1. As to quaternary structure, interacts (via the N-terminal Ubl domain) with PRKN. Interact (via N-terminal region) with PINK1. Interact (via N-terminal region) with PINK1.

It is found in the cytoplasm. It localises to the nucleus. The protein resides in the mitochondrion. Its subcellular location is the cytosol. The protein operates within protein modification; protein ubiquitination. Substrate recognition component of a SCF (SKP1-CUL1-F-box protein) E3 ubiquitin-protein ligase complex which mediates the ubiquitination and subsequent proteasomal degradation of target proteins and plays a role in several biological processes such as cell cycle, cell proliferation, or maintenance of chromosome stability. Recognizes and ubiquitinates BIRC2 and the cell cycle regulator DLGAP5. Plays a role downstream of PINK1 in the clearance of damaged mitochondria via selective autophagy (mitophagy) by targeting PRKN to dysfunctional depolarized mitochondria. Promotes MFN1 ubiquitination. Mediates the ubiquitination and proteasomal degradation of UXT isoform 2, thereby impairing the NF-kappa-B signaling pathway. Inhibits NF-kappa-B pathway also by promoting the ubiquitination of TRAF2. Affects the assembly state and activity of the proteasome in the cells including neurons by ubiquitinating the proteasomal subunit PSMA2 via 'Lys-63'-linked polyubiquitin chains. Promotes 'Lys-48'-linked polyubiquitination SIRT7, leading to the hydrogen peroxide-induced cell death. This is F-box only protein 7 (FBXO7) from Homo sapiens (Human).